We begin with the raw amino-acid sequence, 334 residues long: MTIPGTILDTARTQVLEQGIGLNQQQLMEVLTLPEEQIPDLMELAHQVRLKWCGEEIEVEGIISLKTGGCPEDCHFCSQSGLFESPVRSVWLDIPNLVEAAKQTAKTGATEFCIVAAVKGPDERLMTQLEEAVLAIHSEVEIEVAASIGTLNKEQVDRLAAAGVHRYNHNLETARSYFPEVVTTHTWEERRETLRLVAEAGMEVCSGGILGMGETLEQRAEFAVQLAELDPHEVPMNFLDPRPGTPFADRELMDSRDALRSIGAFRLAMPHTMLRFAGGRELTLGDKGSEQALLGGINAMIVGNYLTTLGRPMEDDLDMMDRLQLPIKVLNKVI.

The 226-residue stretch at 55–280 folds into the Radical SAM core domain; sequence EEIEVEGIIS…HTMLRFAGGR (226 aa). [4Fe-4S] cluster is bound by residues cysteine 70, cysteine 74, and cysteine 77. Cysteine 113, cysteine 205, and arginine 275 together coordinate [2Fe-2S] cluster.

Belongs to the radical SAM superfamily. Biotin synthase family. Homodimer. It depends on [4Fe-4S] cluster as a cofactor. [2Fe-2S] cluster is required as a cofactor.

The catalysed reaction is (4R,5S)-dethiobiotin + (sulfur carrier)-SH + 2 reduced [2Fe-2S]-[ferredoxin] + 2 S-adenosyl-L-methionine = (sulfur carrier)-H + biotin + 2 5'-deoxyadenosine + 2 L-methionine + 2 oxidized [2Fe-2S]-[ferredoxin]. It functions in the pathway cofactor biosynthesis; biotin biosynthesis; biotin from 7,8-diaminononanoate: step 2/2. Catalyzes the conversion of dethiobiotin (DTB) to biotin by the insertion of a sulfur atom into dethiobiotin via a radical-based mechanism. This chain is Biotin synthase, found in Corynebacterium glutamicum (strain ATCC 13032 / DSM 20300 / JCM 1318 / BCRC 11384 / CCUG 27702 / LMG 3730 / NBRC 12168 / NCIMB 10025 / NRRL B-2784 / 534).